The sequence spans 198 residues: Small ribosomal subunit protein uS5 (198 aa).

The S5 DRBM domain occupies 46–109; it reads LEDDVLEISM…NNAKLNIFKV (64 aa).

It belongs to the universal ribosomal protein uS5 family. In terms of assembly, part of the 30S ribosomal subunit. Contacts protein S4.

Its function is as follows. With S4 and S12 plays an important role in translational accuracy. The sequence is that of Small ribosomal subunit protein uS5 from Archaeoglobus fulgidus (strain ATCC 49558 / DSM 4304 / JCM 9628 / NBRC 100126 / VC-16).